Consider the following 1246-residue polypeptide: Stromal processing peptidase, chloroplastic (1246 aa).

The N-terminal 136 residues, 1–136 (MASFPSPPLA…AKIRRRHVLH (136 aa)), are a transit peptide targeting the chloroplast. Position 228 (His-228) interacts with Zn(2+). Glu-231 serves as the catalytic Proton acceptor. Zn(2+) is bound at residue His-232. Glu-302 is an active-site residue. Glu-309 contributes to the Zn(2+) binding site.

Belongs to the peptidase M16 family. Zn(2+) is required as a cofactor.

It localises to the plastid. The protein localises to the chloroplast stroma. In terms of biological role, cleaves presequences (transit peptides) from chloroplastic protein precursors. Initially recognizes a precursor by binding to the C-terminus of its transit peptide and then removes the transit peptide in a single endoproteolytic step. In a next step, pursues the cleavage of transit peptide to a subfragment form. The polypeptide is Stromal processing peptidase, chloroplastic (Oryza sativa subsp. japonica (Rice)).